Here is an 85-residue protein sequence, read N- to C-terminus: Homeobox protein knotted-1-like 5 (85 aa).

Residues 1–21 (ELKEMLLKKYSGCLSRLRSEF) form the ELK domain. The homeobox; TALE-type DNA-binding region spans 22–85 (LKKRKKGKLP…NQRKRHWKPS (64 aa)).

Belongs to the TALE/KNOX homeobox family. Strongly expressed in ear inflorescence primordia and shoot meristem. Weakly expressed in embryos. Absent from leaves.

Its subcellular location is the nucleus. In terms of biological role, probably binds to the DNA sequence 5'-TGAC-3'. This chain is Homeobox protein knotted-1-like 5 (KNOX5), found in Zea mays (Maize).